A 167-amino-acid polypeptide reads, in one-letter code: Pathogenesis-related protein PR-1 type (167 aa).

An N-terminal signal peptide occupies residues 1 to 29; it reads MAHNHWCNLFSVALVCVVALVMVQYSVAQ. The region spanning 36–155 is the SCP domain; it reads VDAHNAARSA…NGAWFITCNY (120 aa). 3 disulfides stabilise this stretch: C72–C144, C117–C123, and C139–C153.

It belongs to the CRISP family.

Its function is as follows. Probably involved in the defense reaction of plants against pathogens. This Sambucus nigra (European elder) protein is Pathogenesis-related protein PR-1 type.